A 428-amino-acid chain; its full sequence is Aspartate--tRNA(Asp) ligase (428 aa).

Position 166 (Glu-166) interacts with L-aspartate. Positions 188–191 are aspartate; it reads QLYK. An L-aspartate-binding site is contributed by Arg-210. Residues 210–212, 218–220, and Glu-351 each bind ATP; these read RAE and RHL. 2 residues coordinate Mg(2+): Glu-351 and Ser-354. The L-aspartate site is built by Ser-354 and Arg-358. Residue 399-402 participates in ATP binding; the sequence is GLER.

Belongs to the class-II aminoacyl-tRNA synthetase family. Type 2 subfamily. As to quaternary structure, homodimer. It depends on Mg(2+) as a cofactor.

The protein resides in the cytoplasm. The catalysed reaction is tRNA(Asp) + L-aspartate + ATP = L-aspartyl-tRNA(Asp) + AMP + diphosphate. Catalyzes the attachment of L-aspartate to tRNA(Asp) in a two-step reaction: L-aspartate is first activated by ATP to form Asp-AMP and then transferred to the acceptor end of tRNA(Asp). This chain is Aspartate--tRNA(Asp) ligase, found in Thermoplasma acidophilum (strain ATCC 25905 / DSM 1728 / JCM 9062 / NBRC 15155 / AMRC-C165).